The sequence spans 189 residues: Peptidyl-tRNA hydrolase (189 aa).

Tyrosine 14 is a binding site for tRNA. Histidine 19 (proton acceptor) is an active-site residue. TRNA contacts are provided by tyrosine 64, asparagine 66, and asparagine 112.

This sequence belongs to the PTH family. In terms of assembly, monomer.

It localises to the cytoplasm. The catalysed reaction is an N-acyl-L-alpha-aminoacyl-tRNA + H2O = an N-acyl-L-amino acid + a tRNA + H(+). Its function is as follows. Hydrolyzes ribosome-free peptidyl-tRNAs (with 1 or more amino acids incorporated), which drop off the ribosome during protein synthesis, or as a result of ribosome stalling. In terms of biological role, catalyzes the release of premature peptidyl moieties from peptidyl-tRNA molecules trapped in stalled 50S ribosomal subunits, and thus maintains levels of free tRNAs and 50S ribosomes. This chain is Peptidyl-tRNA hydrolase, found in Clostridium botulinum (strain ATCC 19397 / Type A).